Consider the following 98-residue polypeptide: NADH-ubiquinone oxidoreductase chain 4L (98 aa).

The next 3 helical transmembrane spans lie at 1–21 (MTLT…GMLT), 27–47 (VASL…ATLI), and 61–81 (IILL…LISI).

This sequence belongs to the complex I subunit 4L family. In terms of assembly, core subunit of respiratory chain NADH dehydrogenase (Complex I) which is composed of 45 different subunits.

The protein localises to the mitochondrion inner membrane. The enzyme catalyses a ubiquinone + NADH + 5 H(+)(in) = a ubiquinol + NAD(+) + 4 H(+)(out). Functionally, core subunit of the mitochondrial membrane respiratory chain NADH dehydrogenase (Complex I) which catalyzes electron transfer from NADH through the respiratory chain, using ubiquinone as an electron acceptor. Part of the enzyme membrane arm which is embedded in the lipid bilayer and involved in proton translocation. The protein is NADH-ubiquinone oxidoreductase chain 4L (MT-ND4L) of Macaca mulatta (Rhesus macaque).